Consider the following 100-residue polypeptide: NADH-quinone oxidoreductase subunit K (100 aa).

The next 3 membrane-spanning stretches (helical) occupy residues 4–24 (LQHG…GLVI), 28–48 (LLFM…AFVV), and 60–80 (VMYI…LALL).

This sequence belongs to the complex I subunit 4L family. In terms of assembly, NDH-1 is composed of 13 different subunits. Subunits NuoA, H, J, K, L, M, N constitute the membrane sector of the complex.

It is found in the cell inner membrane. The enzyme catalyses a quinone + NADH + 5 H(+)(in) = a quinol + NAD(+) + 4 H(+)(out). In terms of biological role, NDH-1 shuttles electrons from NADH, via FMN and iron-sulfur (Fe-S) centers, to quinones in the respiratory chain. The immediate electron acceptor for the enzyme in this species is believed to be ubiquinone. Couples the redox reaction to proton translocation (for every two electrons transferred, four hydrogen ions are translocated across the cytoplasmic membrane), and thus conserves the redox energy in a proton gradient. This is NADH-quinone oxidoreductase subunit K from Shigella boydii serotype 18 (strain CDC 3083-94 / BS512).